The sequence spans 262 residues: Hydroxyethylthiazole kinase (262 aa).

Substrate is bound at residue M43. 2 residues coordinate ATP: R118 and T164. Substrate is bound at residue A191.

The protein belongs to the Thz kinase family. The cofactor is Mg(2+).

It carries out the reaction 5-(2-hydroxyethyl)-4-methylthiazole + ATP = 4-methyl-5-(2-phosphooxyethyl)-thiazole + ADP + H(+). It participates in cofactor biosynthesis; thiamine diphosphate biosynthesis; 4-methyl-5-(2-phosphoethyl)-thiazole from 5-(2-hydroxyethyl)-4-methylthiazole: step 1/1. Catalyzes the phosphorylation of the hydroxyl group of 4-methyl-5-beta-hydroxyethylthiazole (THZ). The sequence is that of Hydroxyethylthiazole kinase from Cereibacter sphaeroides (strain ATCC 17023 / DSM 158 / JCM 6121 / CCUG 31486 / LMG 2827 / NBRC 12203 / NCIMB 8253 / ATH 2.4.1.) (Rhodobacter sphaeroides).